The primary structure comprises 274 residues: Large ribosomal subunit protein uL2 (274 aa).

The tract at residues 223–274 (VAMNPVDHPHGGGEGRTSGGRHPVTPWGVPTKGYKTRSNKRTDKYIVRRRNK) is disordered.

It belongs to the universal ribosomal protein uL2 family. As to quaternary structure, part of the 50S ribosomal subunit. Forms a bridge to the 30S subunit in the 70S ribosome.

Its function is as follows. One of the primary rRNA binding proteins. Required for association of the 30S and 50S subunits to form the 70S ribosome, for tRNA binding and peptide bond formation. It has been suggested to have peptidyltransferase activity; this is somewhat controversial. Makes several contacts with the 16S rRNA in the 70S ribosome. In Shewanella putrefaciens (strain CN-32 / ATCC BAA-453), this protein is Large ribosomal subunit protein uL2.